A 232-amino-acid chain; its full sequence is Ubiquinone biosynthesis O-methyltransferase (232 aa).

4 residues coordinate S-adenosyl-L-methionine: Arg-36, Gly-55, Asp-76, and Leu-120.

Belongs to the methyltransferase superfamily. UbiG/COQ3 family.

It catalyses the reaction a 3-demethylubiquinol + S-adenosyl-L-methionine = a ubiquinol + S-adenosyl-L-homocysteine + H(+). The enzyme catalyses a 3-(all-trans-polyprenyl)benzene-1,2-diol + S-adenosyl-L-methionine = a 2-methoxy-6-(all-trans-polyprenyl)phenol + S-adenosyl-L-homocysteine + H(+). It functions in the pathway cofactor biosynthesis; ubiquinone biosynthesis. Functionally, O-methyltransferase that catalyzes the 2 O-methylation steps in the ubiquinone biosynthetic pathway. The polypeptide is Ubiquinone biosynthesis O-methyltransferase (Pseudomonas aeruginosa (strain UCBPP-PA14)).